Here is a 194-residue protein sequence, read N- to C-terminus: Histone H1.0 (194 aa).

An N-acetylmethionine modification is found at methionine 1. Over residues 1–11 (MTENSTSAPAA) the composition is skewed to low complexity. The interval 1 to 28 (MTENSTSAPAAKPKRAKASKKSTDHPKY) is disordered. Threonine 2 is subject to N-acetylthreonine; in Histone H1.0, N-terminally processed. Positions 24–97 (DHPKYSDMIV…GASGSFRLAK (74 aa)) constitute an H15 domain. A Citrulline modification is found at arginine 42. The interval 86-194 (GVGASGSFRL…SSAKRASKKK (109 aa)) is disordered. Serine 104 carries the ADP-ribosylserine modification. Residues 105–194 (VAFKKTKKEV…SSAKRASKKK (90 aa)) show a composition bias toward basic residues.

This sequence belongs to the histone H1/H5 family. Post-translationally, ADP-ribosylated on Ser-104 in response to DNA damage.

The protein resides in the nucleus. It is found in the chromosome. Its function is as follows. Histones H1 are necessary for the condensation of nucleosome chains into higher-order structures. The histones H1.0 are found in cells that are in terminal stages of differentiation or that have low rates of cell division. This is Histone H1.0 (H1-0) from Mus musculus (Mouse).